Consider the following 27-residue polypeptide: MTAFASLREPLVLANLKIKVHIYRMKR.

This is an uncharacterized protein from Saccharomyces cerevisiae (strain ATCC 204508 / S288c) (Baker's yeast).